We begin with the raw amino-acid sequence, 347 residues long: Photosystem II protein D1 (347 aa).

A run of 3 helical transmembrane segments spans residues 31–48 (YIGW…LAII), 120–135 (HFIG…EWEF), and 144–158 (WIYL…AATA). Histidine 120 contributes to the chlorophyll a binding site. Tryptophan 128 is a binding site for pheophytin a. The [CaMn4O5] cluster site is built by aspartate 172 and glutamate 191. Residues 199 to 220 (FHILGVAGVFGGSLFSAMHGSL) traverse the membrane as a helical segment. Chlorophyll a is bound at residue histidine 200. A quinone contacts are provided by residues histidine 217 and 266–267 (SF). Position 217 (histidine 217) interacts with Fe cation. Histidine 274 is a Fe cation binding site. Residues 276–290 (FLAAWPVIGIWFTAL) traverse the membrane as a helical segment. Histidine 334, glutamate 335, and aspartate 344 together coordinate [CaMn4O5] cluster.

This sequence belongs to the reaction center PufL/M/PsbA/D family. In terms of assembly, PSII is composed of 1 copy each of membrane proteins PsbA, PsbB, PsbC, PsbD, PsbE, PsbF, PsbH, PsbI, PsbJ, PsbK, PsbL, PsbM, PsbT, PsbX, PsbY, PsbZ, Psb30/Ycf12, at least 3 peripheral proteins of the oxygen-evolving complex and a large number of cofactors. It forms dimeric complexes. Requires The D1/D2 heterodimer binds P680, chlorophylls that are the primary electron donor of PSII, and subsequent electron acceptors. It shares a non-heme iron and each subunit binds pheophytin, quinone, additional chlorophylls, carotenoids and lipids. D1 provides most of the ligands for the Mn4-Ca-O5 cluster of the oxygen-evolving complex (OEC). There is also a Cl(-1) ion associated with D1 and D2, which is required for oxygen evolution. The PSII complex binds additional chlorophylls, carotenoids and specific lipids. as cofactor. In terms of processing, tyr-163 forms a radical intermediate that is referred to as redox-active TyrZ, YZ or Y-Z.

The protein localises to the plastid. The protein resides in the chloroplast thylakoid membrane. The enzyme catalyses 2 a plastoquinone + 4 hnu + 2 H2O = 2 a plastoquinol + O2. In terms of biological role, photosystem II (PSII) is a light-driven water:plastoquinone oxidoreductase that uses light energy to abstract electrons from H(2)O, generating O(2) and a proton gradient subsequently used for ATP formation. It consists of a core antenna complex that captures photons, and an electron transfer chain that converts photonic excitation into a charge separation. The D1/D2 (PsbA/PsbD) reaction center heterodimer binds P680, the primary electron donor of PSII as well as several subsequent electron acceptors. This Alexandrium tamarense (Red tide dinoflagellate) protein is Photosystem II protein D1.